A 363-amino-acid polypeptide reads, in one-letter code: UDP-N-acetylglucosamine--N-acetylmuramyl-(pentapeptide) pyrophosphoryl-undecaprenol N-acetylglucosamine transferase (363 aa).

Residues 7–9 (TGG), asparagine 125, serine 196, isoleucine 251, and glutamine 296 each bind UDP-N-acetyl-alpha-D-glucosamine.

The protein belongs to the glycosyltransferase 28 family. MurG subfamily.

It is found in the cell membrane. The catalysed reaction is Mur2Ac(oyl-L-Ala-gamma-D-Glu-L-Lys-D-Ala-D-Ala)-di-trans,octa-cis-undecaprenyl diphosphate + UDP-N-acetyl-alpha-D-glucosamine = beta-D-GlcNAc-(1-&gt;4)-Mur2Ac(oyl-L-Ala-gamma-D-Glu-L-Lys-D-Ala-D-Ala)-di-trans,octa-cis-undecaprenyl diphosphate + UDP + H(+). The protein operates within cell wall biogenesis; peptidoglycan biosynthesis. Its function is as follows. Cell wall formation. Catalyzes the transfer of a GlcNAc subunit on undecaprenyl-pyrophosphoryl-MurNAc-pentapeptide (lipid intermediate I) to form undecaprenyl-pyrophosphoryl-MurNAc-(pentapeptide)GlcNAc (lipid intermediate II). The chain is UDP-N-acetylglucosamine--N-acetylmuramyl-(pentapeptide) pyrophosphoryl-undecaprenol N-acetylglucosamine transferase from Latilactobacillus sakei subsp. sakei (strain 23K) (Lactobacillus sakei subsp. sakei).